The following is a 256-amino-acid chain: Imidazole glycerol phosphate synthase subunit HisF (256 aa).

Residues Asp12 and Asp131 contribute to the active site.

The protein belongs to the HisA/HisF family. Heterodimer of HisH and HisF.

The protein localises to the cytoplasm. The enzyme catalyses 5-[(5-phospho-1-deoxy-D-ribulos-1-ylimino)methylamino]-1-(5-phospho-beta-D-ribosyl)imidazole-4-carboxamide + L-glutamine = D-erythro-1-(imidazol-4-yl)glycerol 3-phosphate + 5-amino-1-(5-phospho-beta-D-ribosyl)imidazole-4-carboxamide + L-glutamate + H(+). Its pathway is amino-acid biosynthesis; L-histidine biosynthesis; L-histidine from 5-phospho-alpha-D-ribose 1-diphosphate: step 5/9. Its function is as follows. IGPS catalyzes the conversion of PRFAR and glutamine to IGP, AICAR and glutamate. The HisF subunit catalyzes the cyclization activity that produces IGP and AICAR from PRFAR using the ammonia provided by the HisH subunit. This chain is Imidazole glycerol phosphate synthase subunit HisF, found in Pseudomonas syringae pv. tomato (strain ATCC BAA-871 / DC3000).